A 147-amino-acid polypeptide reads, in one-letter code: Large ribosomal subunit protein bL9 (147 aa).

The protein belongs to the bacterial ribosomal protein bL9 family.

Its function is as follows. Binds to the 23S rRNA. The protein is Large ribosomal subunit protein bL9 of Phocaeicola vulgatus (strain ATCC 8482 / DSM 1447 / JCM 5826 / CCUG 4940 / NBRC 14291 / NCTC 11154) (Bacteroides vulgatus).